The following is a 416-amino-acid chain: Probable glucan 1,3-beta-glucosidase A (416 aa).

The N-terminal stretch at 1–22 (MIFKFSQKALVALYLVVGLAEA) is a signal peptide. Residue Glu211 is the Proton donor of the active site. 2 cysteine pairs are disulfide-bonded: Cys291/Cys415 and Cys316/Cys342. The Nucleophile role is filled by Glu308. N-linked (GlcNAc...) asparagine glycosylation is present at Asn344.

Belongs to the glycosyl hydrolase 5 (cellulase A) family. Monomer. It depends on Mn(2+) as a cofactor.

The protein resides in the secreted. The catalysed reaction is Successive hydrolysis of beta-D-glucose units from the non-reducing ends of (1-&gt;3)-beta-D-glucans, releasing alpha-glucose.. Its function is as follows. Beta-glucanases participate in the metabolism of beta-glucan, the main structural component of the cell wall. It could also function biosynthetically as a transglycosylase. This is Probable glucan 1,3-beta-glucosidase A (exgA) from Aspergillus fumigatus (strain ATCC MYA-4609 / CBS 101355 / FGSC A1100 / Af293) (Neosartorya fumigata).